The primary structure comprises 407 residues: Melanoma-associated antigen B6B (407 aa).

Positions 1–16 are enriched in basic residues; sequence MPRGQKSKLRARGKRR. The segment at 1 to 185 is disordered; the sequence is MPRGQKSKLR…ESLSSSKRAA (185 aa). Polar residues-rich tracts occupy residues 56 to 68 and 94 to 109; these read SGSS…QGAS and PSTS…SQGA. A compositionally biased stretch (basic and acidic residues) spans 123 to 132; sequence KSDEAAKGQN. Residues 133–155 are compositionally biased toward polar residues; sequence EKSPSTSRDASVPQESQGASPTG. The MAGE domain maps to 195–394; that stretch reads IKRKANKMVQ…GLYPHLYEDA (200 aa).

The chain is Melanoma-associated antigen B6B from Homo sapiens (Human).